Consider the following 460-residue polypeptide: MGTIHLFRKSQRSLVGKLTHEFRLVAADRRSWKILLFGAINLICIGFLLMWCSSTNSIALTAYTYLTIFDLFSLITCLISYWVMVKKPSPVYSFGFERFEVLAVFASTVLAQLGALFILKESAERFLEQPEIHTGRLLVGTFVALFFNLFTMLSVRNKPFAYVSEAASTSWLQEHVADLSRSICGIIPGLSSIFLPRMNPFVLIDIAGALALCITYMLIEINNYYAVDTASAIAIALMTFGTMYPMSVYSGKVLLQTTPPHVFGQLDKLLREVSTLDGVLEVRNEHFWTLGFGTLAGSVHVRIRRDANEQMVLAHVTNRLYTLVSTLTVQIFKDDWIRPTLSSVPIANNMLNLSDHHVITMPSLKAADNLNPVTSTPAKPSSPPPEFSFNTPGKNVNPVILLNTQTRPYGLGLNHGSTPYSSVLNQGFGIPGMGATQGFRTGFTNVPSRYGTNTRGQSRP.

The Cytoplasmic segment spans residues 1-33 (MGTIHLFRKSQRSLVGKLTHEFRLVAADRRSWK). A helical transmembrane segment spans residues 34–54 (ILLFGAINLICIGFLLMWCSS). Over 55 to 64 (TNSIALTAYT) the chain is Extracellular. A helical transmembrane segment spans residues 65–85 (YLTIFDLFSLITCLISYWVMV). At 86–98 (KKPSPVYSFGFER) the chain is on the cytoplasmic side. The helical transmembrane segment at 99-119 (FEVLAVFASTVLAQLGALFIL) threads the bilayer. Residues 120 to 134 (KESAERFLEQPEIHT) are Extracellular-facing. The chain crosses the membrane as a helical span at residues 135 to 155 (GRLLVGTFVALFFNLFTMLSV). At 156–200 (RNKPFAYVSEAASTSWLQEHVADLSRSICGIIPGLSSIFLPRMNP) the chain is on the cytoplasmic side. Residues 201–221 (FVLIDIAGALALCITYMLIEI) traverse the membrane as a helical segment. Residues 222 to 228 (NNYYAVD) are Extracellular-facing. The chain crosses the membrane as a helical span at residues 229 to 249 (TASAIAIALMTFGTMYPMSVY). Over 250 to 460 (SGKVLLQTTP…GTNTRGQSRP (211 aa)) the chain is Cytoplasmic. Positions 372–392 (PVTSTPAKPSSPPPEFSFNTP) are disordered.

This sequence belongs to the cation diffusion facilitator (CDF) transporter (TC 2.A.4) family. SLC30A subfamily. In terms of assembly, heterodimer with SLC30A5; form a functional zinc ion transmembrane transporter.

The protein localises to the golgi apparatus. The protein resides in the trans-Golgi network membrane. Functionally, has probably no intrinsic transporter activity but together with SLC30A5 forms a functional zinc ion:proton antiporter heterodimer, mediating zinc entry into the lumen of organelles along the secretory pathway. As part of that zinc ion:proton antiporter, contributes to zinc ion homeostasis within the early secretory pathway and regulates the activation and folding of enzymes like alkaline phosphatases and enzymes involved in phosphatidylinositol glycan anchor biosynthesis. This is Zinc transporter 6 (SLC30A6) from Gallus gallus (Chicken).